Here is a 96-residue protein sequence, read N- to C-terminus: Protein CLAVATA 3 (96 aa).

An N-terminal signal peptide occupies residues 1 to 21 (MDSKSFLLLLLLFCFLFLHDA). The disordered stretch occupies residues 68-96 (ELRTVPSGPDPLHHHVNPPRQPRNNFQLP). Hydroxyproline is present on residues proline 73 and proline 76. Proline 76 carries an O-linked (Ara...) hydroxyproline glycan.

The protein belongs to the CLV3/ESR signal peptide family. In terms of assembly, interacts with the extracellular leucine-rich repeat region of CLV1. Interacts with CLV2. CLV3-derived CLE peptides interacts with a tetrameric complex made of two CLV2/CRN heterodimers. Post-translationally, the MCLV3 peptide contains two hydroxyprolines, but hydroxylation had no direct effect on MCLV3 activity. In terms of processing, the O-glycosylation (arabinosylation) of the hydroxyproline P-76 enhances binding affinity of the MCLV3 peptide for its receptor. First detected in heart stage embryos in a patch of cells between the developing cotyledons. In vegetative and inflorescence meristems, expressed in a small cone of cells at the meristem apex.

The protein localises to the secreted. It is found in the extracellular space. Extracellular signal that regulates meristem maintenance. Acts with CLV1 as a ligand-receptor pair in a signal transduction pathway coordinating growth between adjacent meristematic regions and controlling the balance between meristem cell proliferation and differentiation. In terms of biological role, the secreted peptide MCLV3 activates a signal transduction cascade to restrict WUSCHEL (WUS) expression, inducing shoot and root meristem consumption as cells differentiated into other organs. The protein is Protein CLAVATA 3 of Arabidopsis thaliana (Mouse-ear cress).